Reading from the N-terminus, the 166-residue chain is Large ribosomal subunit protein bL9 (166 aa).

It belongs to the bacterial ribosomal protein bL9 family.

Binds to the 23S rRNA. This chain is Large ribosomal subunit protein bL9, found in Brachyspira hyodysenteriae (strain ATCC 49526 / WA1).